An 84-amino-acid chain; its full sequence is UPF0386 protein Oant_1614 (84 aa).

Belongs to the UPF0386 family.

This chain is UPF0386 protein Oant_1614, found in Brucella anthropi (strain ATCC 49188 / DSM 6882 / CCUG 24695 / JCM 21032 / LMG 3331 / NBRC 15819 / NCTC 12168 / Alc 37) (Ochrobactrum anthropi).